The primary structure comprises 499 residues: MAMAEGERTECAETPRDEPPADGTLKRAEELKTQANDYFKAKDYENAIKFYSQAIELNPGNAIYYGNRSLAYLRTECYGYALGDATRAIELDKKYIKGYYRRAASNMALGKFRAALRDYETVVKVKPNDKDAKMKYQECSKIVKQKAFERAIAGDEHRRSVVDSLDIESMTIEDEYSGPKLEDGKVTITFMKDLMQWYKDQKKLHRKCAYQILVQVKEVLCKLSTLVETTLKETEKITVCGDTHGQFYDLLNIFELNGLPSETNPYIFNGDFVDRGSFSVEVILTLFGFKLLYPDHFHLLRGNHETDNMNQIYGFEGEVKAKYTAQMYELFSEVFEWLPLAQCINGKVLIMHGGLFSEDGVTLDDIRKIERNRQPPDSGPMCDLLWSDPQPQNGRSVSKRGVSCQFGPDVTKAFLEENQLDYIIRSHEVKAEGYEVAHGGRCVTVFSAPNYCDQMGNKASYIHLQGSDLRPQFHQFTAVPHPNVKPMAYANTLLQLGMM.

The disordered stretch occupies residues 1–24; it reads MAMAEGERTECAETPRDEPPADGT. N-acetylalanine is present on Ala-2. TPR repeat units follow at residues 28–61, 62–95, and 96–129; these read AEELKTQANDYFKAKDYENAIKFYSQAIELNPGN, AIYYGNRSLAYLRTECYGYALGDATRAIELDKKY, and IKGYYRRAASNMALGKFRAALRDYETVVKVKPND. The catalytic stretch occupies residues 184 to 499; that stretch reads GKVTITFMKD…ANTLLQLGMM (316 aa). Positions 242, 244, and 271 each coordinate Mn(2+). His-244 serves as a coordination point for substrate. Substrate-binding positions include Arg-275 and 303 to 304; that span reads NH. Residue Asn-303 participates in Mn(2+) binding. His-304 functions as the Proton donor/acceptor in the catalytic mechanism. His-352 contributes to the Mn(2+) binding site. Residues Arg-400 and His-427 each contribute to the substrate site. His-427 serves as a coordination point for Mn(2+). The interval 495–499 is required for autoinhibition; it reads QLGMM.

Belongs to the PPP phosphatase family. PP-5 (PP-T) subfamily. Probably forms a complex composed of chaperones HSP90 and HSP70, co-chaperones STIP1/HOP, CDC37, PPP5C, PTGES3/p23, TSC1 and client protein TSC2. Probably forms a complex composed of chaperones HSP90 and HSP70, co-chaperones CDC37, PPP5C, TSC1 and client protein TSC2, CDK4, AKT, RAF1 and NR3C1; this complex does not contain co-chaperones STIP1/HOP and PTGES3/p23. Part of a complex with HSP90/HSP90AA1 and steroid receptors. Interacts (via TPR repeats) with HSP90AA1 (via TPR repeat-binding motif) or HSPA1A/HSPA1B; the interaction is direct and activates the phosphatase activity. Dissociates from HSPA1A/HSPA1B and HSP90AA1 in response to arachidonic acid. Interacts with CPNE1 (via VWFA domain). Interacts with CDC16, CDC27. Interacts with KLHDC10 (via the 6 Kelch repeats); inhibits the phosphatase activity on MAP3K5. Interacts with ATM and ATR; both interactions are induced by DNA damage and enhance ATM and ATR kinase activity. Interacts with RAD17; reduced by DNA damage. Interacts with nuclear receptors such as NR3C1/GCR and PPARG (activated by agonist); regulates their transactivation activities. Interacts (via TPR repeats) with S100 proteins S100A1, S100A2, S100A6, S100B and S100P; the interactions are calcium-dependent, strongly activate PPP5C phosphatase activity and compete with HSP90AA1 and MAP3K5 interactions. Interacts with SMAD2 and SMAD3 but not with SMAD1; decreases SMAD3 phosphorylation and protein levels. Interacts (via TPR repeats) with CRY1 and CRY2; the interaction with CRY2 down-regulates the phosphatase activity on CSNK1E. Interacts (via TPR repeats) with the active form of RAC1, GNA12 or GNA13; these interactions activate the phosphatase activity and translocate PPP5C to the cell membrane. Interacts with FLCN. Requires Mg(2+) as cofactor. Mn(2+) is required as a cofactor. Post-translationally, activated by at least two different proteolytic cleavages producing a 56 kDa and a 50 kDa form. Expressed in liver (at protein level) and brain, enriched in suprachiasmatic nuclei.

It is found in the nucleus. The protein localises to the cytoplasm. It localises to the cell membrane. It carries out the reaction O-phospho-L-seryl-[protein] + H2O = L-seryl-[protein] + phosphate. It catalyses the reaction O-phospho-L-threonyl-[protein] + H2O = L-threonyl-[protein] + phosphate. Autoinhibited. In the autoinhibited state, the TPR domain interacts with the catalytic region and prevents substrate access to the catalytic pocket. Allosterically activated by various polyunsaturated fatty acids, free long-chain fatty-acids and long-chain fatty acyl-CoA esters, arachidonic acid being the most effective activator. HSP90A and probably RAC1, GNA12 and GNA13 can also release the autoinhibition by the TPR repeat. Activation by RAC1, GNA12 and GNA13 is synergistic with the one produced by fatty acids binding. Inhibited by okadaic acid. Serine/threonine-protein phosphatase that dephosphorylates a myriad of proteins involved in different signaling pathways including the kinases CSNK1E, ASK1/MAP3K5, PRKDC and RAF1, the nuclear receptors NR3C1, PPARG, ESR1 and ESR2, SMAD proteins and TAU/MAPT. Implicated in wide ranging cellular processes, including apoptosis, differentiation, DNA damage response, cell survival, regulation of ion channels or circadian rhythms, in response to steroid and thyroid hormones, calcium, fatty acids, TGF-beta as well as oxidative and genotoxic stresses. Participates in the control of DNA damage response mechanisms such as checkpoint activation and DNA damage repair through, for instance, the regulation ATM/ATR-signaling and dephosphorylation of PRKDC and TP53BP1. Inhibits ASK1/MAP3K5-mediated apoptosis induced by oxidative stress. Plays a positive role in adipogenesis, mainly through the dephosphorylation and activation of PPARG transactivation function. Also dephosphorylates and inhibits the anti-adipogenic effect of NR3C1. Regulates the circadian rhythms, through the dephosphorylation and activation of CSNK1E. May modulate TGF-beta signaling pathway by the regulation of SMAD3 phosphorylation and protein expression levels. Dephosphorylates and may play a role in the regulation of TAU/MAPT. Through their dephosphorylation, may play a role in the regulation of ions channels such as KCNH2. Dephosphorylate FNIP1, disrupting interaction with HSP90AA1/Hsp90. The sequence is that of Serine/threonine-protein phosphatase 5 (Ppp5c) from Mus musculus (Mouse).